Here is a 279-residue protein sequence, read N- to C-terminus: Biotin synthase (279 aa).

Residues 2–228 (KTIMLCAICS…ETRVMIAGGR (227 aa)) form the Radical SAM core domain. 3 residues coordinate [4Fe-4S] cluster: Cys-17, Cys-21, and Cys-24. [2Fe-2S] cluster-binding residues include Cys-61, Cys-96, Cys-154, and Arg-221.

The protein belongs to the radical SAM superfamily. Biotin synthase family. Homodimer. Requires [4Fe-4S] cluster as cofactor. The cofactor is [2Fe-2S] cluster.

The enzyme catalyses (4R,5S)-dethiobiotin + (sulfur carrier)-SH + 2 reduced [2Fe-2S]-[ferredoxin] + 2 S-adenosyl-L-methionine = (sulfur carrier)-H + biotin + 2 5'-deoxyadenosine + 2 L-methionine + 2 oxidized [2Fe-2S]-[ferredoxin]. The protein operates within cofactor biosynthesis; biotin biosynthesis; biotin from 7,8-diaminononanoate: step 2/2. Its function is as follows. Catalyzes the conversion of dethiobiotin (DTB) to biotin by the insertion of a sulfur atom into dethiobiotin via a radical-based mechanism. This is Biotin synthase from Campylobacter concisus (strain 13826).